The primary structure comprises 59 residues: U-limacoditoxin(3)-Dv33 (59 aa).

The signal sequence occupies residues 1–19; sequence MSKVILLCLIFALFACSIS.

This sequence belongs to the limacoditoxin-3 family. Post-translationally, the natural peptide is not amidated. The recombinant peptide is amidated. In terms of tissue distribution, expressed by the venom secretory cell of the spine. The spine is a cuticular structure containing a single large nucleated venom-secreting cell at its base. It is an independent unit capable of producing, storing and injecting venom. On the back of D.vulnerans caterpillars, spines are grouped together by 50 to 100 to form scoli, of which there are eight in D.vulnerans.

The protein resides in the secreted. Probable toxin. Shows a relatively potent antiparasitic activity against the major pathogenic nematode of ruminants (H.contortus, EC(50)=2.6 uM). Does not show insecticidal and antimicrobial activities. Does not induce increase in intracellular calcium in mouse DRG neurons, suggesting that it does not induce pain. The protein is U-limacoditoxin(3)-Dv33 of Doratifera vulnerans (Mottled cup moth).